The primary structure comprises 460 residues: Cysteine--tRNA ligase (460 aa).

Cys-28 lines the Zn(2+) pocket. The 'HIGH' region signature appears at 30-40 (MTVYDYCHLGH). Residues Cys-209, His-234, and Glu-238 each contribute to the Zn(2+) site. A 'KMSKS' region motif is present at residues 266 to 270 (KMSKS). Lys-269 is a binding site for ATP.

Belongs to the class-I aminoacyl-tRNA synthetase family. In terms of assembly, monomer. Zn(2+) is required as a cofactor.

Its subcellular location is the cytoplasm. It carries out the reaction tRNA(Cys) + L-cysteine + ATP = L-cysteinyl-tRNA(Cys) + AMP + diphosphate. This Pseudomonas fluorescens (strain Pf0-1) protein is Cysteine--tRNA ligase.